The following is a 307-amino-acid chain: Auxin-induced protein PCNT115 (307 aa).

Tyr-64 serves as the catalytic Proton donor. His-136 contacts substrate. 215–225 (SPLGRGFLSSG) contacts NADP(+).

Belongs to the aldo/keto reductase family. Aldo/keto reductase 2 subfamily.

This is Auxin-induced protein PCNT115 from Nicotiana tabacum (Common tobacco).